The sequence spans 1205 residues: MYLKSLTLKGFKSFAAPTTLRFEPGITAVVGPNGSGKSNVVDALAWVMGEQGAKTLRGGKMEDVIFAGTSSRAPLGRAEVTVSIDNSDNALPIEYTEVSITRRMFRDGASEYEINGSSCRLMDVQELLSDSGIGREMHVIVGQGKLEEILQSRPEDRRAFIEEAAGVLKHRKRKEKALRKLDTMAANLARLTDLTTELRRQLKPLGRQAEAAQRAAAIQADLRDARLRLAADDLVSRRAEREAVFQAEAAMRREHDEAAARLAVASEELAAHESAVAELSTRAESIQHTWFGLSALAERVDATVRIASERAHHLDIEPVAVSDTDPRKPEELEAEAQQVAVAEQQLLAELDAARARLDAARAELADRERRAAEADRAHLAAVREEADRREGLARLAGQVETMRARVESIDESVARLSERIEDAAMRAQQTRAEFETVQGRIGELDQGEVGLDEHHERTVAALRLADERVAELQSAERAAERQVASLRARIDALAVGLQRKDGAAWLAHNRSGAGLFGSIAQLVKVRSGYEAALAAALGPAADALAVDGLTAAGSAVSALKQADGGRAVLVLSDWPAPQAPQSASGEMLPSGAQWALDLVESPPQLVGAMIAMLSGVAVVNDLTEAMGLVEIRPELRAVTVDGDLVGAGWVSGGSDRKLSTLEVTSEIDKARSELAAAEALAAQLNAALAGALTEQSARQDAAEQALAALNESDTAISAMYEQLGRLGQEARAAEEEWNRLLQQRTEQEAVRTQTLDDVIQLETQLRKAQETQRVQVAQPIDRQAISAAADRARGVEVEARLAVRTAEERANAVRGRADSLRRAAAAEREARVRAQQARAARLHAAAVAAAVADCGRLLAGRLHRAVDGASQLRDASAAQRQQRLAAMAAVRDEVNTLSARVGELTDSLHRDELANAQAALRIEQLEQMVLEQFGMAPADLITEYGPHVALPPTELEMAEFEQARERGEQVIAPAPMPFDRVTQERRAKRAERALAELGRVNPLALEEFAALEERYNFLSTQLEDVKAARKDLLGVVADVDARILQVFNDAFVDVEREFRGVFTALFPGGEGRLRLTEPDDMLTTGIEVEARPPGKKITRLSLLSGGEKALTAVAMLVAIFRARPSPFYIMDEVEAALDDVNLRRLLSLFEQLREQSQIIIITHQKPTMEVADALYGVTMQNDGITAVISQRMRGQQVDQLVTNSS.

Residue 32-39 coordinates ATP; it reads PNGSGKSN. Coiled-coil stretches lie at residues 169 to 288 and 330 to 499; these read KHRK…SIQH and EELE…GLQR. The region spanning 514–628 is the SMC hinge domain; the sequence is GLFGSIAQLV…VNDLTEAMGL (115 aa). Coiled-coil stretches lie at residues 661–771, 802–836, and 979–1033; these read LEVT…AQET, AVRT…RAQQ, and DRVT…KDLL.

It belongs to the SMC family. Homodimer.

The protein resides in the cytoplasm. Its function is as follows. Required for chromosome condensation and partitioning. The polypeptide is Chromosome partition protein Smc (Mycobacterium tuberculosis (strain ATCC 25618 / H37Rv)).